The chain runs to 210 residues: Isomeliandiol synthase ISM1 (210 aa).

5 helical membrane passes run 17–37 (FTLHAWNGLSLFLIISGTWFI), 50–70 (LLCWWALTGLIHIIQEGYFVF), 107–127 (IEGMAAVVMGPLSLLVVYAIV), 135–155 (ILQFGVSIAQLYGACLYFLTA), and 172–192 (YYVGQSSIWIIVPSLIAINFW). Residues 46 to 188 (GDRLLLCWWA…IWIIVPSLIA (143 aa)) form the EXPERA domain.

Belongs to the EBP family.

The protein resides in the membrane. It catalyses the reaction 7,8-epoxymelianol = isomeliandiol. Its pathway is secondary metabolite biosynthesis; terpenoid biosynthesis. Isomerase involved in the biosynthesis of limonoids and quassinoids triterpene natural products such as ailanthone, chaparrinone, glaucarubinone and amarolide, allelopathic degraded triterpene lactones inhibiting the growth of other plants, and possessing antimalarial, antifeedant, insecticidal, anti-inflammatory and anticancer activities. Catalyzes the conversion of 7,8-epoxymelianol to isomeliandiol via skeletal rearrangements. The chain is Isomeliandiol synthase ISM1 from Ailanthus altissima (Tree-of-heaven).